A 1452-amino-acid chain; its full sequence is Protein clueless (1452 aa).

2 disordered regions span residues 1–93 and 266–288; these read MALE…SNGH and KKTR…VSEP. The segment covering 8–24 has biased composition (low complexity); the sequence is KNSNATATSDATATKAS. Residues 42 to 59 are compositionally biased toward polar residues; the sequence is PIPNSNHQNSNQNLVNGN. Positions 68–77 are enriched in basic residues; that stretch reads AKKKGKKNRN. Phosphoserine is present on S272. The Clu domain occupies 426-668; it reads RAEDAFSSKL…RTFPPDVNFL (243 aa). Disordered regions lie at residues 726-775, 962-1013, and 1414-1452; these read KQSE…GDTK, AVSS…SSVS, and ANNN…ATSS. The span at 750–766 shows a compositional bias: basic and acidic residues; it reads GADKTDVKEEKNEENEK. Over residues 970–985 the composition is skewed to basic residues; sequence KKRGNGGKHNKHKSSK. Residues 990-1013 are compositionally biased toward low complexity; it reads QQQQQATGNQNGSSSGSSNGSSVS. Over residues 1423–1433 the composition is skewed to basic and acidic residues; it reads AVPKDVEEQKE.

The protein belongs to the CLU family.

It is found in the cytoplasm. In terms of biological role, mRNA-binding protein involved in proper cytoplasmic distribution of mitochondria. This chain is Protein clueless, found in Drosophila erecta (Fruit fly).